A 116-amino-acid polypeptide reads, in one-letter code: Venom nerve growth factor (116 aa).

3 disulfide bridges follow: C14-C78, C56-C106, and C66-C108.

It belongs to the NGF-beta family. Homodimer; non-covalently linked. Not glycosylated. As to expression, expressed by the venom gland.

Its subcellular location is the secreted. Its function is as follows. Nerve growth factor is important for the development and maintenance of the sympathetic and sensory nervous systems. It stimulates division and differentiation of sympathetic and embryonic sensory neurons as well as basal forebrain cholinergic neurons in the brain. Its relevance in the snake venom is not clear. However, it has been shown to inhibit metalloproteinase-dependent proteolysis of platelet glycoprotein Ib alpha, suggesting a metalloproteinase inhibition to prevent metalloprotease autodigestion and/or protection against prey proteases. Binds a lipid between the two protein chains in the homodimer. The lipid-bound form promotes histamine relase from mouse mast cells, contrary to the lipid-free form. This chain is Venom nerve growth factor, found in Naja naja (Indian cobra).